A 518-amino-acid chain; its full sequence is ATP synthase subunit alpha (518 aa).

ATP is bound at residue 169–176 (GDRKTGKT).

This sequence belongs to the ATPase alpha/beta chains family. F-type ATPases have 2 components, CF(1) - the catalytic core - and CF(0) - the membrane proton channel. CF(1) has five subunits: alpha(3), beta(3), gamma(1), delta(1), epsilon(1). CF(0) has three main subunits: a(1), b(2) and c(9-12). The alpha and beta chains form an alternating ring which encloses part of the gamma chain. CF(1) is attached to CF(0) by a central stalk formed by the gamma and epsilon chains, while a peripheral stalk is formed by the delta and b chains.

The protein resides in the cell membrane. It carries out the reaction ATP + H2O + 4 H(+)(in) = ADP + phosphate + 5 H(+)(out). In terms of biological role, produces ATP from ADP in the presence of a proton gradient across the membrane. The alpha chain is a regulatory subunit. The sequence is that of ATP synthase subunit alpha from Enterococcus faecalis (strain ATCC 700802 / V583).